We begin with the raw amino-acid sequence, 216 residues long: RNA pyrophosphohydrolase (216 aa).

Residues 6–149 (GFRPNVGIIL…KRDVYQLALT (144 aa)) form the Nudix hydrolase domain. The short motif at 38-59 (GGIKYGETPMQAMYRELHEETG) is the Nudix box element.

Belongs to the Nudix hydrolase family. RppH subfamily. Requires a divalent metal cation as cofactor.

Its function is as follows. Accelerates the degradation of transcripts by removing pyrophosphate from the 5'-end of triphosphorylated RNA, leading to a more labile monophosphorylated state that can stimulate subsequent ribonuclease cleavage. This is RNA pyrophosphohydrolase from Burkholderia ambifaria (strain MC40-6).